Reading from the N-terminus, the 130-residue chain is Fluoride-specific ion channel FluC (130 aa).

Helical transmembrane passes span 3-23 (FVFL…YFVG), 38-58 (LGTF…GHLA), 67-87 (FGIF…SYGL), and 102-122 (ISYV…GWFL). Na(+) contacts are provided by Gly-77 and Thr-80.

Belongs to the fluoride channel Fluc/FEX (TC 1.A.43) family.

The protein resides in the cell inner membrane. The enzyme catalyses fluoride(in) = fluoride(out). Its activity is regulated as follows. Na(+) is not transported, but it plays an essential structural role and its presence is essential for fluoride channel function. Functionally, fluoride-specific ion channel. Important for reducing fluoride concentration in the cell, thus reducing its toxicity. In Helicobacter pylori (strain G27), this protein is Fluoride-specific ion channel FluC.